The sequence spans 264 residues: Mannose-specific lectin CEA (264 aa).

The N-terminal stretch at 1 to 23 is a signal peptide; sequence MAKLLLFLLPAILGLLVPRSAVA. Bulb-type lectin domains lie at 26–131 and 145–252; these read TNYL…PWVP and NNLL…PQAK. Beta-D-mannose is bound by residues 51–55, Tyr59, Trp63, Gln64, 170–174, Tyr178, and 182–185; these read QDDCN, QGDCN, and YGWQ. Residues 51–59 carry the Carbohydrate-binding motif 1 motif; the sequence is QDDCNLVLY. 2 disulfides stabilise this stretch: Cys54–Cys74 and Cys173–Cys195. The Carbohydrate-binding motif 2 motif lies at 170–178; it reads QGDCNLVLY.

As to quaternary structure, forms heterotetramer of 2 chains 1 and 2 chains 2 arranged as a dimer of chain 1 and chain 2 heterodimers.

Its subcellular location is the secreted. Its function is as follows. Mannose-specific lectin. Shows agglutinating activity towards erythrocytes from rabbit. Has insecticidal activity against cotton aphids and other hemipteran insects. The protein is Mannose-specific lectin CEA of Colocasia esculenta (Wild taro).